Consider the following 138-residue polypeptide: Small ribosomal subunit protein uS11 (138 aa).

Positions 1-12 are enriched in low complexity; the sequence is MAQAKKGGTAAK. Disordered stretches follow at residues 1–32 and 119–138; these read MAQA…AAHI and ISDV…RRRV. Residues 13–22 are compositionally biased toward basic residues; sequence KGQKTRRREK.

This sequence belongs to the universal ribosomal protein uS11 family. Part of the 30S ribosomal subunit. Interacts with proteins S7 and S18. Binds to IF-3.

Its function is as follows. Located on the platform of the 30S subunit, it bridges several disparate RNA helices of the 16S rRNA. Forms part of the Shine-Dalgarno cleft in the 70S ribosome. The chain is Small ribosomal subunit protein uS11 from Mycolicibacterium smegmatis (strain ATCC 700084 / mc(2)155) (Mycobacterium smegmatis).